The following is a 233-amino-acid chain: 3-dehydroquinate dehydratase (233 aa).

Residues 34-36 (ELR) and Arg-64 each bind 3-dehydroquinate. His-118 (proton donor/acceptor) is an active-site residue. Lys-145 serves as the catalytic Schiff-base intermediate with substrate. The 3-dehydroquinate site is built by Arg-185, Ser-205, and Gln-209.

The protein belongs to the type-I 3-dehydroquinase family. In terms of assembly, homodimer.

The enzyme catalyses 3-dehydroquinate = 3-dehydroshikimate + H2O. It participates in metabolic intermediate biosynthesis; chorismate biosynthesis; chorismate from D-erythrose 4-phosphate and phosphoenolpyruvate: step 3/7. Its function is as follows. Involved in the third step of the chorismate pathway, which leads to the biosynthesis of aromatic amino acids. Catalyzes the cis-dehydration of 3-dehydroquinate (DHQ) and introduces the first double bond of the aromatic ring to yield 3-dehydroshikimate. In Coxiella burnetii (strain CbuK_Q154) (Coxiella burnetii (strain Q154)), this protein is 3-dehydroquinate dehydratase.